Reading from the N-terminus, the 134-residue chain is Protein X (134 aa).

Residues 25–48 (SRGRPVSGPFGPLPSPSSSAVPAD) are disordered. Positions 29-47 (PVSGPFGPLPSPSSSAVPA) are enriched in low complexity. Positions 68 to 117 (PCALRLTSARRMETTVNAHQVLPKVLHKRTLGLSAMSTTDLEAYFKDCLF) are mitochondrial targeting sequence.

It belongs to the orthohepadnavirus protein X family. As to quaternary structure, may form homodimer. May interact with host CEBPA, CFLAR, CREB1, DDB1, E4F1, HBXIP, HSPD1/HSP60, NFKBIA, POLR2E and SMAD4. Interacts with host SMC5-SMC6 complex and induces its degradation. Interacts with host TRPC4AP; leading to prevent ubiquitination of TRPC4AP. Interacts with host PLSCR1; this interaction promotes ubiquitination and degradation of HBx and impairs HBx-mediated cell proliferation. In terms of processing, a fraction may be phosphorylated in insect cells and HepG2 cells, a human hepatoblastoma cell line. Phosphorylated in vitro by host protein kinase C or mitogen-activated protein kinase. N-acetylated in insect cells.

It is found in the host cytoplasm. The protein resides in the host nucleus. The protein localises to the host mitochondrion. Its function is as follows. Multifunctional protein that plays a role in silencing host antiviral defenses and promoting viral transcription. Does not seem to be essential for HBV infection. May be directly involved in development of cirrhosis and liver cancer (hepatocellular carcinoma). Most of cytosolic activities involve modulation of cytosolic calcium. The effect on apoptosis is controversial depending on the cell types in which the studies have been conducted. May induce apoptosis by localizing in mitochondria and causing loss of mitochondrial membrane potential. May also modulate apoptosis by binding host CFLAR, a key regulator of the death-inducing signaling complex (DISC). Promotes viral transcription by using the host E3 ubiquitin ligase DDB1 to target the SMC5-SMC6 complex to proteasomal degradation. This host complex would otherwise bind to viral episomal DNA, and prevents its transcription. Moderately stimulates transcription of many different viral and cellular transcription elements. Promoters and enhancers stimulated by HBx contain DNA binding sites for NF-kappa-B, AP-1, AP-2, c-EBP, ATF/CREB, or the calcium-activated factor NF-AT. The protein is Protein X of Homo sapiens (Human).